A 93-amino-acid polypeptide reads, in one-letter code: MVINMDFDITVIGYIAGTLTTFASLPQLIKSLKEKDMSNISLAFVITFTTGLTLWLIYGILRNDYPIIVFNILSLMFWIPITYLKIRDEMRKS.

Helical transmembrane passes span 9–29, 40–60, and 66–86; these read ITVI…PQLI, ISLA…IYGI, and PIIV…YLKI.

Its subcellular location is the cell membrane. This is an uncharacterized protein from Methanocaldococcus jannaschii (strain ATCC 43067 / DSM 2661 / JAL-1 / JCM 10045 / NBRC 100440) (Methanococcus jannaschii).